Consider the following 310-residue polypeptide: Quinolinate synthase (310 aa).

Iminosuccinate contacts are provided by His27 and Ser44. Cys89 contributes to the [4Fe-4S] cluster binding site. Iminosuccinate contacts are provided by residues 115–117 and Ser132; that span reads YVN. [4Fe-4S] cluster is bound at residue Cys175. Residues 201–203 and Thr222 each bind iminosuccinate; that span reads HPE. Residue Cys267 participates in [4Fe-4S] cluster binding.

The protein belongs to the quinolinate synthase family. Type 2 subfamily. [4Fe-4S] cluster serves as cofactor.

Its subcellular location is the cytoplasm. It catalyses the reaction iminosuccinate + dihydroxyacetone phosphate = quinolinate + phosphate + 2 H2O + H(+). Its pathway is cofactor biosynthesis; NAD(+) biosynthesis; quinolinate from iminoaspartate: step 1/1. Functionally, catalyzes the condensation of iminoaspartate with dihydroxyacetone phosphate to form quinolinate. This is Quinolinate synthase from Thermus thermophilus (strain ATCC 27634 / DSM 579 / HB8).